The primary structure comprises 418 residues: MFDINLIRKDIATTKEKMLNKKVPSNLFDQIFDLDVLVRSLMQQEQNLNAKKNQLSKEIGILAKNKDPKLQQTLDLVNNIKNELQDISLTLSNKQDELNKLLLVIPNMPDDSVPIGNDENDNVEIKKVFKPKKFDFLPLAHWDLAVKNKLIDFDKSTKITGSRFIIYTNFGARLYRALQQFCLDMNVKAGFSEIWAPVIVNQESLIGSGNLPKFADDLFKLENSNYYLSPTAEVQLTNLHRNEILKASDLPLYYTALTPCFRSEAGSAGRDVRGVIRQHQFHKVELVKLCKPEDSFKELESMTRQAESILEALELPYRRIVLCTGDLGFSSAKTYDLEVWLPSYNAYKEISSCSNCTNFQARRAKIRYKETIDATTELVHTLNGSSLAIDRLWAAIVENYQQEDGSINIPKVLKKYIY.

231–233 (TAE) is a binding site for L-serine. An ATP-binding site is contributed by 262-264 (RSE). Glu-285 contacts L-serine. 349–352 (EISS) lines the ATP pocket. Ser-385 contributes to the L-serine binding site.

The protein belongs to the class-II aminoacyl-tRNA synthetase family. Type-1 seryl-tRNA synthetase subfamily. Homodimer. The tRNA molecule binds across the dimer.

The protein localises to the cytoplasm. The enzyme catalyses tRNA(Ser) + L-serine + ATP = L-seryl-tRNA(Ser) + AMP + diphosphate + H(+). The catalysed reaction is tRNA(Sec) + L-serine + ATP = L-seryl-tRNA(Sec) + AMP + diphosphate + H(+). It participates in aminoacyl-tRNA biosynthesis; selenocysteinyl-tRNA(Sec) biosynthesis; L-seryl-tRNA(Sec) from L-serine and tRNA(Sec): step 1/1. Its function is as follows. Catalyzes the attachment of serine to tRNA(Ser). Is also able to aminoacylate tRNA(Sec) with serine, to form the misacylated tRNA L-seryl-tRNA(Sec), which will be further converted into selenocysteinyl-tRNA(Sec). The polypeptide is Serine--tRNA ligase (Ureaplasma parvum serovar 3 (strain ATCC 27815 / 27 / NCTC 11736)).